We begin with the raw amino-acid sequence, 202 residues long: ATP-dependent Clp protease proteolytic subunit (202 aa).

Ser-101 (nucleophile) is an active-site residue. His-126 is an active-site residue.

Belongs to the peptidase S14 family. As to quaternary structure, component of the chloroplastic Clp protease core complex.

It localises to the plastid. The protein localises to the chloroplast stroma. It catalyses the reaction Hydrolysis of proteins to small peptides in the presence of ATP and magnesium. alpha-casein is the usual test substrate. In the absence of ATP, only oligopeptides shorter than five residues are hydrolyzed (such as succinyl-Leu-Tyr-|-NHMec, and Leu-Tyr-Leu-|-Tyr-Trp, in which cleavage of the -Tyr-|-Leu- and -Tyr-|-Trp bonds also occurs).. In terms of biological role, cleaves peptides in various proteins in a process that requires ATP hydrolysis. Has a chymotrypsin-like activity. Plays a major role in the degradation of misfolded proteins. This Illicium oligandrum (Star anise) protein is ATP-dependent Clp protease proteolytic subunit.